Reading from the N-terminus, the 361-residue chain is CRISPR system associated protein Cas8 (361 aa).

As to quaternary structure, monomer. Can form a Cascade complex with Csa5, Cas7, Cas5a, Cas3 and Cas3'.

Its function is as follows. CRISPR (clustered regularly interspaced short palindromic repeat) is an adaptive immune system that provides protection against mobile genetic elements (viruses, transposable elements and conjugative plasmids). CRISPR clusters contain sequences complementary to antecedent mobile elements and target invading nucleic acids. CRISPR clusters are transcribed and processed into CRISPR RNA (crRNA). This is CRISPR system associated protein Cas8 (cas8a2) from Thermoproteus tenax (strain ATCC 35583 / DSM 2078 / JCM 9277 / NBRC 100435 / Kra 1).